Here is a 212-residue protein sequence, read N- to C-terminus: MTQLADLRRNYMLSALSETDVAPDPIRQFQSWFDEAMQAKLPEPNAMTLATVGADGQPSARIVLLKGMDADGFTFFTNYESRKGVDLLANPRAALLFHWVQLERQIRVEGIVEKVEDAESDAYYASRPLGSRLGAWASEQSREVAGRDVIEAREADFRNKFGENPPRPPHWGGYRLKPTWIEFWQGRPSRLHDRIAYRQNADGNWQIVRLSP.

Substrate contacts are provided by residues 8-11 (RRNY) and lysine 66. Residues 61-66 (RIVLLK), 76-77 (FT), arginine 82, lysine 83, and glutamine 105 contribute to the FMN site. Positions 123, 127, and 131 each coordinate substrate. Residues 140–141 (QS) and tryptophan 184 contribute to the FMN site. Position 190-192 (190-192 (RLH)) interacts with substrate. Residue arginine 194 participates in FMN binding.

The protein belongs to the pyridoxamine 5'-phosphate oxidase family. Homodimer. It depends on FMN as a cofactor.

The catalysed reaction is pyridoxamine 5'-phosphate + O2 + H2O = pyridoxal 5'-phosphate + H2O2 + NH4(+). The enzyme catalyses pyridoxine 5'-phosphate + O2 = pyridoxal 5'-phosphate + H2O2. It functions in the pathway cofactor metabolism; pyridoxal 5'-phosphate salvage; pyridoxal 5'-phosphate from pyridoxamine 5'-phosphate: step 1/1. Its pathway is cofactor metabolism; pyridoxal 5'-phosphate salvage; pyridoxal 5'-phosphate from pyridoxine 5'-phosphate: step 1/1. Its function is as follows. Catalyzes the oxidation of either pyridoxine 5'-phosphate (PNP) or pyridoxamine 5'-phosphate (PMP) into pyridoxal 5'-phosphate (PLP). This chain is Pyridoxine/pyridoxamine 5'-phosphate oxidase, found in Cupriavidus metallidurans (strain ATCC 43123 / DSM 2839 / NBRC 102507 / CH34) (Ralstonia metallidurans).